We begin with the raw amino-acid sequence, 293 residues long: uncharacterized protein (293 aa).

This is an uncharacterized protein from Acanthamoeba polyphaga (Amoeba).